We begin with the raw amino-acid sequence, 535 residues long: Probable histone-arginine methyltransferase 1.3 (535 aa).

N-acetylmethionine is present on methionine 1. The SAM-dependent MTase PRMT-type domain occupies 141–456; the sequence is EASSAKMYFH…QSYTIDLTLS (316 aa). Glutamine 158, arginine 167, glycine 191, glutamate 213, and glutamate 243 together coordinate S-adenosyl-L-methionine. Residues glutamate 257 and glutamate 266 contribute to the active site. Serine 271 serves as a coordination point for S-adenosyl-L-methionine. The segment at 494–517 is disordered; the sequence is VAQEPPLQPQPELSTQQDIQTPND. Over residues 507-516 the composition is skewed to polar residues; it reads STQQDIQTPN.

This sequence belongs to the class I-like SAM-binding methyltransferase superfamily. Protein arginine N-methyltransferase family. In terms of assembly, interacts with PQT3 in the nucleus. In terms of processing, ubiquitinated by PQT3.

Its subcellular location is the nucleus. It localises to the cytoplasm. The enzyme catalyses L-arginyl-[protein] + 2 S-adenosyl-L-methionine = N(omega),N(omega)-dimethyl-L-arginyl-[protein] + 2 S-adenosyl-L-homocysteine + 2 H(+). Functionally, methylates (mono- and asymmetric dimethylation) the guanidino nitrogens of arginyl residues in several proteins involved in DNA packaging, transcription regulation, and mRNA stability. Recruited to promoters upon gene activation, methylates histone H3 and activates transcription via chromatin remodeling. Positive regulator in the oxidative stress tolerance that promotes the expression of enzymes preventing oxidative stress such as APX1 and GPX1 by histone methylation (H3R17me2a). Confers tolerance to cadmium CdCl(2) and salt NaCl stresses. The chain is Probable histone-arginine methyltransferase 1.3 (PRMT13) from Arabidopsis thaliana (Mouse-ear cress).